The primary structure comprises 159 residues: Large ribosomal subunit protein uL11 (159 aa).

The tract at residues Met1–Pro26 is disordered.

This sequence belongs to the universal ribosomal protein uL11 family. Part of the ribosomal stalk of the 50S ribosomal subunit. Interacts with L10 and the large rRNA to form the base of the stalk. L10 forms an elongated spine to which L12 dimers bind in a sequential fashion forming a multimeric L10(L12)X complex.

Forms part of the ribosomal stalk which helps the ribosome interact with GTP-bound translation factors. The sequence is that of Large ribosomal subunit protein uL11 from Haloferax volcanii (strain ATCC 29605 / DSM 3757 / JCM 8879 / NBRC 14742 / NCIMB 2012 / VKM B-1768 / DS2) (Halobacterium volcanii).